Reading from the N-terminus, the 116-residue chain is Putative iron-sulfur cluster insertion protein ErpA (116 aa).

Iron-sulfur cluster is bound by residues cysteine 44, cysteine 108, and cysteine 110.

The protein belongs to the HesB/IscA family. Homodimer. The cofactor is iron-sulfur cluster.

Functionally, required for insertion of 4Fe-4S clusters. This chain is Putative iron-sulfur cluster insertion protein ErpA, found in Thiobacillus denitrificans (strain ATCC 25259 / T1).